The chain runs to 232 residues: Large ribosomal subunit protein uL1 (232 aa).

It belongs to the universal ribosomal protein uL1 family. In terms of assembly, part of the 50S ribosomal subunit.

In terms of biological role, binds directly to 23S rRNA. The L1 stalk is quite mobile in the ribosome, and is involved in E site tRNA release. Its function is as follows. Protein L1 is also a translational repressor protein, it controls the translation of the L11 operon by binding to its mRNA. The polypeptide is Large ribosomal subunit protein uL1 (Azobacteroides pseudotrichonymphae genomovar. CFP2).